We begin with the raw amino-acid sequence, 390 residues long: GTPase Obg (390 aa).

In terms of domain architecture, Obg spans 1 to 159; it reads MKFVDEATIK…RELRLELLLL (159 aa). In terms of domain architecture, OBG-type G spans 160 to 333; the sequence is ADVGMLGLPN…LCDELADFMD (174 aa). Residues 166–173, 191–195, 213–216, 283–286, and 314–316 each bind GTP; these read GLPNAGKS, FTTLI, DIPG, NKTD, and AAV. 2 residues coordinate Mg(2+): S173 and T193.

This sequence belongs to the TRAFAC class OBG-HflX-like GTPase superfamily. OBG GTPase family. As to quaternary structure, monomer. Requires Mg(2+) as cofactor.

Its subcellular location is the cytoplasm. An essential GTPase which binds GTP, GDP and possibly (p)ppGpp with moderate affinity, with high nucleotide exchange rates and a fairly low GTP hydrolysis rate. Plays a role in control of the cell cycle, stress response, ribosome biogenesis and in those bacteria that undergo differentiation, in morphogenesis control. In Aliivibrio fischeri (strain ATCC 700601 / ES114) (Vibrio fischeri), this protein is GTPase Obg.